The chain runs to 549 residues: Glutamyl-tRNA(Gln) amidotransferase subunit B, mitochondrial (549 aa).

The transit peptide at 1-23 directs the protein to the mitochondrion; the sequence is MLRISRDTKIVARVTHVTKSRTY.

Belongs to the GatB/GatE family. GatB subfamily. As to quaternary structure, subunit of the heterotrimeric GatFAB amidotransferase (AdT) complex, composed of A, B and F subunits.

The protein localises to the mitochondrion. The catalysed reaction is L-glutamyl-tRNA(Gln) + L-glutamine + ATP + H2O = L-glutaminyl-tRNA(Gln) + L-glutamate + ADP + phosphate + H(+). In terms of biological role, allows the formation of correctly charged Gln-tRNA(Gln) through the transamidation of misacylated Glu-tRNA(Gln) in the mitochondria. The reaction takes place in the presence of glutamine and ATP through an activated gamma-phospho-Glu-tRNA(Gln). This is Glutamyl-tRNA(Gln) amidotransferase subunit B, mitochondrial from Yarrowia lipolytica (strain CLIB 122 / E 150) (Yeast).